The following is a 123-amino-acid chain: Large ribosomal subunit protein uL29 (123 aa).

The protein belongs to the universal ribosomal protein uL29 family.

The protein is Large ribosomal subunit protein uL29 (rpl-35) of Caenorhabditis elegans.